The primary structure comprises 147 residues: uncharacterized protein (147 aa).

The first 21 residues, 1 to 21 (MRTIFVGVLLLAIMGEGRLCA), serve as a signal peptide directing secretion.

This is an uncharacterized protein from Treponema pallidum (strain Nichols).